The chain runs to 449 residues: HSPB1-associated protein 1 homolog (449 aa).

The region spanning 102–266 (WAYADYKYIA…DEARVAEALT (165 aa)) is the JmjC domain. The segment covering 385–395 (DQDKLRSDNKL) has biased composition (basic and acidic residues). A disordered region spans residues 385-416 (DQDKLRSDNKLGQRSGQSVLQDTENPGGSGEM). Over residues 396 to 410 (GQRSGQSVLQDTENP) the composition is skewed to polar residues.

The protein localises to the cytoplasm. Its function is as follows. May play a role in cellular stress response. This Danio rerio (Zebrafish) protein is HSPB1-associated protein 1 homolog (hspbap1).